We begin with the raw amino-acid sequence, 509 residues long: Maturase K (509 aa).

This sequence belongs to the intron maturase 2 family. MatK subfamily.

Its subcellular location is the plastid. The protein localises to the chloroplast. Its function is as follows. Usually encoded in the trnK tRNA gene intron. Probably assists in splicing its own and other chloroplast group II introns. This Eucommia ulmoides (Hardy rubber tree) protein is Maturase K.